The chain runs to 97 residues: Large ribosomal subunit protein bL27 (97 aa).

A propeptide spanning residues 1–12 (MLKMNLANLQLF) is cleaved from the precursor. The segment at 14-38 (HKKGGGSTSNGRDSESKRLGAKAAD) is disordered.

The protein belongs to the bacterial ribosomal protein bL27 family. Post-translationally, the N-terminus is cleaved by ribosomal processing cysteine protease Prp.

The chain is Large ribosomal subunit protein bL27 from Streptococcus mutans serotype c (strain ATCC 700610 / UA159).